The following is a 995-amino-acid chain: Serine-aspartate repeat-containing protein C (995 aa).

The signal sequence occupies residues 1 to 50; it reads MNNKKTATNRKGMIPNRLNKFSIRKYSVGTASILVGTTLIFGLSGHEAKA. Positions 21-32 match the YSIRK-G/S signaling motif motif; the sequence is FSIRKYSVGTAS. Positions 51-164 are disordered; sequence AEHTNGELNQ…STTPKTTTIK (114 aa). Residues 51-495 form a ligand binding A region region; that stretch reads AEHTNGELNQ…GSSTANGDQK (445 aa). Residues 56–71 show a composition bias toward polar residues; that stretch reads GELNQSKNETTAPSEN. Residues 72-83 show a composition bias toward basic and acidic residues; that stretch reads KTTKKVDSRQLK. The segment covering 84 to 155 has biased composition (polar residues); sequence DNTQTATADQ…SNLTQAKDVS (72 aa). CNA-B domains lie at 496 to 606 and 607 to 717; these read KYNL…YKTP and KYSL…EEET. Residues 678–975 form a disordered region; sequence TQTGTNTTED…NNSNNGTLFG (298 aa). Composition is skewed to acidic residues over residues 685-695 and 712-934; these read TEDDKDADGGE and YYEE…DSDS. An LPXTG sorting signal motif is present at residues 958 to 962; it reads LPETG. Low complexity predominate over residues 960–975; sequence ETGSENNNSNNGTLFG. A Pentaglycyl murein peptidoglycan amidated threonine modification is found at Thr-961. A propeptide spans 962–995 (removed by sortase); the sequence is GSENNNSNNGTLFGGLFAALGSLLLFGRRKKQNK.

It belongs to the serine-aspartate repeat-containing protein (SDr) family. As to quaternary structure, homodimerizes; via N2-Domain. Interacts with host NRXN1; this interaction mediates bacterial attachment to host cells.

It localises to the secreted. It is found in the cell wall. In terms of biological role, cell surface-associated calcium-binding protein which plays an important role in adhesion and pathogenesis. Mediates interactions with components of the extracellular matrix such as host NRXN1 to promote bacterial adhesion. The protein is Serine-aspartate repeat-containing protein C (sdrC) of Staphylococcus aureus (strain NCTC 8325 / PS 47).